Here is a 213-residue protein sequence, read N- to C-terminus: MEHEFWQKKWASNVIGFHLPDTNPILTQYWSALEPKRNETVFVPLCGKSMDLDWLAERHHSVTGVELSQIAVRAFFAERLYTPTVTQLSSTLELYEFDEFTIYSGDYFVAPIEAADLIYDRAALVALPKEMREEYTQVLRSRLKEGGRILLVTLDYDQNEMAGPPFSVPEEEVRALFSGMKITRLQRDEADAEHPKIKKGLSRFAEEVWLIEN.

The S-adenosyl-L-methionine site is built by tryptophan 10, leucine 45, glutamate 66, and arginine 121.

It belongs to the class I-like SAM-binding methyltransferase superfamily. TPMT family.

It localises to the cytoplasm. It carries out the reaction S-adenosyl-L-methionine + a thiopurine = S-adenosyl-L-homocysteine + a thiopurine S-methylether.. The polypeptide is Thiopurine S-methyltransferase (Aliivibrio fischeri (strain MJ11) (Vibrio fischeri)).